We begin with the raw amino-acid sequence, 211 residues long: 3-demethoxyubiquinol 3-hydroxylase (211 aa).

Fe cation-binding residues include glutamate 60, glutamate 90, histidine 93, glutamate 142, glutamate 174, and histidine 177.

This sequence belongs to the COQ7 family. Fe cation is required as a cofactor.

It localises to the cell membrane. It catalyses the reaction a 5-methoxy-2-methyl-3-(all-trans-polyprenyl)benzene-1,4-diol + AH2 + O2 = a 3-demethylubiquinol + A + H2O. It participates in cofactor biosynthesis; ubiquinone biosynthesis. Functionally, catalyzes the hydroxylation of 2-nonaprenyl-3-methyl-6-methoxy-1,4-benzoquinol during ubiquinone biosynthesis. The protein is 3-demethoxyubiquinol 3-hydroxylase of Francisella tularensis subsp. tularensis (strain FSC 198).